The following is a 122-amino-acid chain: Large ribosomal subunit protein bL12 (122 aa).

Belongs to the bacterial ribosomal protein bL12 family. In terms of assembly, homodimer. Part of the ribosomal stalk of the 50S ribosomal subunit. Forms a multimeric L10(L12)X complex, where L10 forms an elongated spine to which 2 to 4 L12 dimers bind in a sequential fashion. Binds GTP-bound translation factors.

In terms of biological role, forms part of the ribosomal stalk which helps the ribosome interact with GTP-bound translation factors. Is thus essential for accurate translation. This chain is Large ribosomal subunit protein bL12, found in Yersinia pseudotuberculosis serotype O:1b (strain IP 31758).